The chain runs to 342 residues: MEWVRGETIGFGTFSTVSTATKSRNSGDFPALIAVKSTDAYGAASLSNEKSVLDSLGDCPEIIRCYGEDSTVENGEEMHNLLLEYASRGSLASYMKKLGGEGLPESTVRRHTGSVLRGLRHIHAKGFAHCDIKLANILLFNDGSVKIADFGLAMRVDGDLTALRKSVEIRGTPLYMAPECVNDNEYGSAADVWALGCAVVEMFSGKTAWSVKEGSHFMSLLIRIGVGDELPKIPEMLSEEGKDFLSKCFVKDPAKRWTAEMLLNHSFVTIDLEDDHRENFVVKVKDEDKVLMSPKCPFEFDDWDSFTLDSNPSFDSPVERLGSLVSGSIPDWSVGGSWLTVR.

The Protein kinase domain maps to 3–268 (WVRGETIGFG…AEMLLNHSFV (266 aa)). Residue 9 to 17 (IGFGTFSTV) coordinates ATP. At Ser18 the chain carries Phosphoserine. Thr19 carries the phosphothreonine modification. Residue Lys36 coordinates ATP. Phosphotyrosine is present on residues Tyr41 and Tyr66. Residues Ser93 and Ser114 each carry the phosphoserine modification. Catalysis depends on Asp131, which acts as the Proton acceptor. The tract at residues 285-342 (KDEDKVLMSPKCPFEFDDWDSFTLDSNPSFDSPVERLGSLVSGSIPDWSVGGSWLTVR) is required for MKK3 binding.

It belongs to the protein kinase superfamily. Ser/Thr protein kinase family. In terms of assembly, interacts with MKK3 and MPK18 via its C-terminal domain. Binds to MKK5. Post-translationally, autophosphorylates; active in phosphorylated state. Dephosphorylated by ABI1. As to expression, expressed in roots, seedlings, leaves, flower buds, flowers and siliques.

The protein localises to the nucleus. Its subcellular location is the cytoplasm. It carries out the reaction L-seryl-[protein] + ATP = O-phospho-L-seryl-[protein] + ADP + H(+). It catalyses the reaction L-threonyl-[protein] + ATP = O-phospho-L-threonyl-[protein] + ADP + H(+). Activated through serine, threonine and tyrosine phosphorylation, especially upon abscisic acid (ABA) treatment. Restricted activity by ABI1-mediated dephosphorylation. Mitogen-activated protein kinase kinase (MAPKK) that phosphorylates both MKK3 and MPK18 and regulate two separate signaling pathways involved in root microtubule functions. MAPKK which regulates abscisic acid (ABA) responses in a MAPKKK20-MKK5-MPK6 cascade involved in root growth (e.g. root cell division and elongation) and stomatal response, probably via MKK5 activation by protein phosphorylation and subsequent activation of MAPK6 by MKK5. Involved in various abiotic stresses (e.g. osmotic stress, cold and hydrogen peroxide) responses by phosphorylating and thus regulating MPK6 activity, in an ABA-independent manner. The chain is Mitogen-activated protein kinase kinase kinase 20 from Arabidopsis thaliana (Mouse-ear cress).